The sequence spans 179 residues: Large ribosomal subunit protein uL5 (179 aa).

The protein belongs to the universal ribosomal protein uL5 family. In terms of assembly, part of the 50S ribosomal subunit; part of the 5S rRNA/L5/L18/L25 subcomplex. Contacts the 5S rRNA and the P site tRNA. Forms a bridge to the 30S subunit in the 70S ribosome.

In terms of biological role, this is one of the proteins that bind and probably mediate the attachment of the 5S RNA into the large ribosomal subunit, where it forms part of the central protuberance. In the 70S ribosome it contacts protein S13 of the 30S subunit (bridge B1b), connecting the 2 subunits; this bridge is implicated in subunit movement. Contacts the P site tRNA; the 5S rRNA and some of its associated proteins might help stabilize positioning of ribosome-bound tRNAs. This Clostridium novyi (strain NT) protein is Large ribosomal subunit protein uL5.